The sequence spans 215 residues: Cytochrome b6 (215 aa).

The helical transmembrane segment at 32 to 52 (IFYCLGGITLTCFLVQVATGF) threads the bilayer. Residue Cys-35 participates in heme c binding. The heme b site is built by His-86 and His-100. 3 helical membrane passes run 90–110 (ASMMVLMMILHVFRVYLTGGF), 116–136 (LTWVTGVVLAVLTASFGVTGY), and 186–206 (LHTFVLPLITAVFMLMHFLMI). Heme b contacts are provided by His-187 and His-202.

The protein belongs to the cytochrome b family. PetB subfamily. The 4 large subunits of the cytochrome b6-f complex are cytochrome b6, subunit IV (17 kDa polypeptide, PetD), cytochrome f and the Rieske protein, while the 4 small subunits are PetG, PetL, PetM and PetN. The complex functions as a dimer. The cofactor is heme b. It depends on heme c as a cofactor.

The protein resides in the plastid thylakoid membrane. Functionally, component of the cytochrome b6-f complex, which mediates electron transfer between photosystem II (PSII) and photosystem I (PSI), cyclic electron flow around PSI, and state transitions. In Cuscuta reflexa (Southern Asian dodder), this protein is Cytochrome b6 (petB).